Here is a 173-residue protein sequence, read N- to C-terminus: Probable F-box protein At1g27490 (173 aa).

Residues 1–46 (MEWSLPVDLQEEILSRVPAKSLARWKSTPKQWKGPISIEFLHLLRS) enclose the F-box domain.

This is Probable F-box protein At1g27490 from Arabidopsis thaliana (Mouse-ear cress).